The sequence spans 164 residues: Peptidyl-prolyl cis-trans isomerase A (164 aa).

Met1 is modified (N-acetylmethionine). N-acetylvaline; in Peptidyl-prolyl cis-trans isomerase A, N-terminally processed is present on Val2. The PPIase cyclophilin-type domain maps to 7–163 (FFDISADGEP…KKITISDCGQ (157 aa)). N6-acetyllysine; alternate is present on Lys28. A Glycyl lysine isopeptide (Lys-Gly) (interchain with G-Cter in SUMO2); alternate cross-link involves residue Lys28. Lys28 participates in a covalent cross-link: Glycyl lysine isopeptide (Lys-Gly) (interchain with G-Cter in ubiquitin); alternate. Residue Lys44 is modified to N6-acetyllysine. Ser77 bears the Phosphoserine mark. Lys82 is modified (N6-acetyllysine; alternate). Lys82 is covalently cross-linked (Glycyl lysine isopeptide (Lys-Gly) (interchain with G-Cter in SUMO2); alternate). Phosphothreonine is present on Thr93. An N-linked (GlcNAc...) asparagine glycan is attached at Asn108. 3 positions are modified to N6-acetyllysine: Lys125, Lys131, and Lys133.

Belongs to the cyclophilin-type PPIase family. PPIase A subfamily. In terms of assembly, interacts with protein phosphatase PPP3CA/calcineurin A. Interacts with PRPF19 isoform 2 (via N-terminus). Interacts with isoform 2 of BSG/CD147. Interacts with FOXO1; the interaction promotes FOXO1 dephosphorylation, nuclear accumulation and transcriptional activity. Interacts with integrin ITGA2B:ITGB3; the interaction is ROS and peptidyl-prolyl cis-trans isomerase (PPIase) activity-dependent and is increased in the presence of thrombin. Interacts with MAP3K5. Interacts with TARDBP; the interaction is dependent on the RNA-binding activity of TARDBP and the PPIase activity of PPIA/CYPA and the acetylation of PPIA/CYPA at Lys-125 favors the interaction. Interacts with HNRNPA1, HNRNPA2B1, HNRNPC, RBMX, HNRNPK and HNRNPM. Acetylation at Lys-125 markedly inhibits catalysis of cis to trans isomerization. PPIA acetylation also antagonizes the immunosuppressive effects of cyclosporine by inhibiting the sequential steps of cyclosporine binding and calcineurin inhibition. Acetylation at Lys-125 favors the interaction with TARDBP.

The protein resides in the cytoplasm. It localises to the secreted. The protein localises to the nucleus. It carries out the reaction [protein]-peptidylproline (omega=180) = [protein]-peptidylproline (omega=0). Its activity is regulated as follows. Binds cyclosporin A (CsA). CsA mediates some of its effects via an inhibitory action on PPIase. In terms of biological role, catalyzes the cis-trans isomerization of proline imidic peptide bonds in oligopeptides. Exerts a strong chemotactic effect on leukocytes partly through activation of one of its membrane receptors BSG/CD147, initiating a signaling cascade that culminates in MAPK/ERK activation. Activates endothelial cells (ECs) in a proinflammatory manner by stimulating activation of NF-kappa-B and ERK, JNK and p38 MAP-kinases and by inducing expression of adhesion molecules including SELE and VCAM1. Induces apoptosis in ECs by promoting the FOXO1-dependent expression of CCL2 and BCL2L11 which are involved in EC chemotaxis and apoptosis. In response to oxidative stress, initiates proapoptotic and antiapoptotic signaling in ECs via activation of NF-kappa-B and AKT1 and up-regulation of antiapoptotic protein BCL2. Negatively regulates MAP3K5/ASK1 kinase activity, autophosphorylation and oxidative stress-induced apoptosis mediated by MAP3K5/ASK1. Necessary for the assembly of TARDBP in heterogeneous nuclear ribonucleoprotein (hnRNP) complexes and regulates TARDBP binding to RNA UG repeats and TARDBP-dependent expression of HDAC6, ATG7 and VCP which are involved in clearance of protein aggregates. Plays an important role in platelet activation and aggregation. Regulates calcium mobilization and integrin ITGA2B:ITGB3 bidirectional signaling via increased ROS production as well as by facilitating the interaction between integrin and the cell cytoskeleton. Binds heparan sulfate glycosaminoglycans. This is Peptidyl-prolyl cis-trans isomerase A (PPIA) from Cricetulus griseus (Chinese hamster).